The following is a 599-amino-acid chain: Proline--tRNA ligase (599 aa).

This sequence belongs to the class-II aminoacyl-tRNA synthetase family. ProS type 1 subfamily. In terms of assembly, homodimer.

Its subcellular location is the cytoplasm. It catalyses the reaction tRNA(Pro) + L-proline + ATP = L-prolyl-tRNA(Pro) + AMP + diphosphate. Functionally, catalyzes the attachment of proline to tRNA(Pro) in a two-step reaction: proline is first activated by ATP to form Pro-AMP and then transferred to the acceptor end of tRNA(Pro). As ProRS can inadvertently accommodate and process non-cognate amino acids such as alanine and cysteine, to avoid such errors it has two additional distinct editing activities against alanine. One activity is designated as 'pretransfer' editing and involves the tRNA(Pro)-independent hydrolysis of activated Ala-AMP. The other activity is designated 'posttransfer' editing and involves deacylation of mischarged Ala-tRNA(Pro). The misacylated Cys-tRNA(Pro) is not edited by ProRS. The sequence is that of Proline--tRNA ligase from Prochlorococcus marinus (strain MIT 9303).